Reading from the N-terminus, the 538-residue chain is MASRSLASISRSASRLLQSNVQKCALPAASIRLSSNNVESKKGIHTGVATQQAAAATKVSAKATAANASGRIVAVIGAVVDVQFDENLPPILNGLEVVGRSPRLILEVSQHLGDNVVRCIAMDGTEGLVRGQPVADTGDPIKIPVGPETLGRIMNVIGEPIDERGPIASKNFAAIHAEAPEFVEMSVEQEILVTGIKVVDLLAPYAKGGKIGLFGGAGVGKTVLIMELINNVAKAHGGYSVFAGVGERTREGNDLYHEMIEGGVIDLKGKNSKVSLVYGQMNEPPGARARVCLTGLTVAEYFRDQEGQDVLLFIDNIFRFTQAGSEVSALLGRIPSAVGYQPTLATDMGSMQERITTTKKGSITSVQAIYVPADDLTDPAPATTFAHLDATTVLSRGIAELAIYPAVDPLDSTSRIMDPNVVGQNHYDIARGVQKILQDYKSLQDIIAILGMDELSEEDKLTVSRARKIQRFLSQPFQVAEVFTGHQGKFVSLEETIRGFTMILKGELDHLPEVAFYMQGGIDDVFKKAEELAKQHGN.

215-222 (GGAGVGKT) is a binding site for ATP.

This sequence belongs to the ATPase alpha/beta chains family. In terms of assembly, subunit of the F-type ATPase which has 2 components, CF(1) - the catalytic core - and CF(0) - the membrane proton channel. Interacts (via N-terminus) with lov-1 (via PLAT domain). As to expression, expressed in three categories of adult male sensory neurons: tail ray B neurons, HOB hook neuron and head cephalic (CEM) neurons.

It localises to the cell projection. The protein localises to the cilium. The protein resides in the mitochondrion. Its subcellular location is the mitochondrion inner membrane. It carries out the reaction ATP + H2O + 4 H(+)(in) = ADP + phosphate + 5 H(+)(out). Functionally, mitochondrial membrane ATP synthase (F(1)F(0) ATP synthase or Complex V) produces ATP from ADP in the presence of a proton gradient across the membrane which is generated by electron transport complexes of the respiratory chain. F-type ATPases consist of two structural domains, F(1) - containing the extramembraneous catalytic core, and F(0) - containing the membrane proton channel, linked together by a central stalk and a peripheral stalk. During catalysis, ATP synthesis in the catalytic domain of F(1) is coupled via a rotary mechanism of the central stalk subunits to proton translocation. Subunits alpha and beta form the catalytic core in F(1). Rotation of the central stalk against the surrounding subunits leads to hydrolysis of ATP in three separate catalytic sites on the beta subunits. Required during male mating behavior for the response to hermaphrodite contact, acting with lov-1 and pkd-2. May be involved in polycystin signaling. This chain is ATP synthase subunit beta, mitochondrial, found in Caenorhabditis elegans.